The sequence spans 199 residues: Elongation factor Ts (199 aa).

The interval 82–85 (TDFV) is involved in Mg(2+) ion dislocation from EF-Tu.

Belongs to the EF-Ts family.

The protein localises to the cytoplasm. In terms of biological role, associates with the EF-Tu.GDP complex and induces the exchange of GDP to GTP. It remains bound to the aminoacyl-tRNA.EF-Tu.GTP complex up to the GTP hydrolysis stage on the ribosome. This Leptospira interrogans serogroup Icterohaemorrhagiae serovar Lai (strain 56601) protein is Elongation factor Ts.